The following is a 276-amino-acid chain: Large ribosomal subunit protein uL2 (276 aa).

Residues 223–276 (GVAMNPVDHPHGGGEGRGKGHHPTSPWGLPTKGYKTRRGKRPSDKFIVRRRNEV) form a disordered region. 2 stretches are compositionally biased toward basic and acidic residues: residues 230-240 (DHPHGGGEGRG) and 263-276 (RPSD…RNEV).

It belongs to the universal ribosomal protein uL2 family. Part of the 50S ribosomal subunit. Forms a bridge to the 30S subunit in the 70S ribosome.

Functionally, one of the primary rRNA binding proteins. Required for association of the 30S and 50S subunits to form the 70S ribosome, for tRNA binding and peptide bond formation. It has been suggested to have peptidyltransferase activity; this is somewhat controversial. Makes several contacts with the 16S rRNA in the 70S ribosome. This Thermotoga maritima (strain ATCC 43589 / DSM 3109 / JCM 10099 / NBRC 100826 / MSB8) protein is Large ribosomal subunit protein uL2.